A 58-amino-acid polypeptide reads, in one-letter code: Cyclotide trypsin inhibitor TopI1 (58 aa).

The N-terminal stretch at 1–23 is a signal peptide; sequence MKFIIVLLLLTALTLTSIPVIEG. A cross-link (cyclopeptide (Ile-Lys)) is located at residues 24–55; sequence ILKRCKTYDDCKDVCKARKGKCEFGICKCMIK. Cystine bridges form between Cys28–Cys45, Cys34–Cys50, and Cys38–Cys52. Position 56 is a serine amide (Ser56).

Post-translationally, this is a cyclic peptide. In terms of tissue distribution, expressed by the venom gland.

Its subcellular location is the secreted. In terms of biological role, first cyclic scorpion trypsin inhibitor (Kd~0.5 nM). Does not inhibit chymotrypsin. This chain is Cyclotide trypsin inhibitor TopI1, found in Tityus obscurus (Amazonian scorpion).